Consider the following 470-residue polypeptide: Cyclin-dependent kinase E-1 (470 aa).

The 309-residue stretch at 25 to 333 (YNLVGKIGEG…ASQALEHEYF (309 aa)) folds into the Protein kinase domain. ATP is bound by residues 31–39 (IGEGTYGLV) and Lys55. Tyr36 carries the post-translational modification Phosphotyrosine. Residue Asp154 is the Proton acceptor of the active site. The disordered stretch occupies residues 428–470 (LNPSVPLQQQRGMAQPHQQQQLRRKDPGMGMSGYAPPNKSRRL). The segment covering 432-448 (VPLQQQRGMAQPHQQQQ) has biased composition (polar residues).

The protein belongs to the protein kinase superfamily. CMGC Ser/Thr protein kinase family. CDC2/CDKX subfamily. Interacts with MED14, HDA19 and LUG. Interacts with KIN10. Expressed in roots, leaves and stems. Expressed in young dividing tissue, such as shoot and root tips, lateral root primordia, young leaves and flowers. Expressed in the inflorescence meristem, inflorescence stem and young flowers.

The protein localises to the nucleus. The enzyme catalyses L-seryl-[protein] + ATP = O-phospho-L-seryl-[protein] + ADP + H(+). It carries out the reaction L-threonyl-[protein] + ATP = O-phospho-L-threonyl-[protein] + ADP + H(+). It catalyses the reaction [DNA-directed RNA polymerase] + ATP = phospho-[DNA-directed RNA polymerase] + ADP + H(+). In terms of biological role, involved in cell differentiation. Required for the specification of stamen and carpel identities and for the proper termination of stem cells in the floral meristem. In Arabidopsis thaliana (Mouse-ear cress), this protein is Cyclin-dependent kinase E-1 (CDKE-1).